The chain runs to 408 residues: MQSAAAVGLLRPCGATTAAAPLQLRNPSPRGFGVGVGQPLLPPRGLRLSAVAPRAGISARRIGLVPASPEQEDERRRGARDVAVAATAAAAGEAGAEEGGGLAKTLQLGALFGLWYLFNIYFNIYNKQVLKVFPYPINITNVQFAVGTVIALFMWITGILKRPKISGAQLAAILPLAMVHTMGNLFTNMSLGKVAVSFTHTIKAMEPFFSVLLSALFLGEMPTPFVVLSLVPIVGGVALASLTEASFNWAGFWSAMASNVTFQSRNVLSKKLMVKKEESLDNITLFSIITVMSFFLLAPVTLLTEGVKVTPTVLQSAGLNLKQIYTRSLIAAFCFHAYQQVSYMILARVSPVTHSVGNCVKRVVVIVTSVLFFRTPVSPINSLGTGVALAGVFLYSQLKRLKPKPKTA.

Residues 1-66 (MQSAAAVGLL…ISARRIGLVP (66 aa)) constitute a chloroplast transit peptide. A run of 7 helical transmembrane segments spans residues 105–125 (TLQL…FNIY), 139–159 (ITNV…ITGI), 165–185 (ISGA…MGNL), 222–242 (PTPF…LASL), 245–262 (ASFN…NVTF), 283–303 (ITLF…VTLL), and 375–395 (TPVS…VFLY). In terms of domain architecture, EamA spans 124-241 (IYNKQVLKVF…PIVGGVALAS (118 aa)).

This sequence belongs to the TPT transporter family. PPT (TC 2.A.7.9) subfamily.

It localises to the plastid. The protein resides in the chloroplast membrane. Phosphoenolpyruvate/phosphate translocator that transports phosphoenolpyruvate (PEP) and dihydroxyacetone phosphate. The protein is Phosphoenolpyruvate/phosphate translocator 1, chloroplastic (PPT1) of Oryza sativa subsp. japonica (Rice).